The following is a 246-amino-acid chain: Small ribosomal subunit protein uS2 (246 aa).

The protein belongs to the universal ribosomal protein uS2 family.

This chain is Small ribosomal subunit protein uS2, found in Chromohalobacter salexigens (strain ATCC BAA-138 / DSM 3043 / CIP 106854 / NCIMB 13768 / 1H11).